The primary structure comprises 298 residues: Probable endonuclease 4 (298 aa).

Zn(2+) contacts are provided by H69, H111, E146, D180, H183, H215, D228, H230, and E260.

It belongs to the AP endonuclease 2 family. Zn(2+) serves as cofactor.

The enzyme catalyses Endonucleolytic cleavage to 5'-phosphooligonucleotide end-products.. Endonuclease IV plays a role in DNA repair. It cleaves phosphodiester bonds at apurinic or apyrimidinic (AP) sites, generating a 3'-hydroxyl group and a 5'-terminal sugar phosphate. The chain is Probable endonuclease 4 from Bacillus cereus (strain B4264).